We begin with the raw amino-acid sequence, 283 residues long: tRNA-cytidine(32) 2-sulfurtransferase (283 aa).

Residues 32 to 37 (SGGKDS) carry the PP-loop motif motif. The [4Fe-4S] cluster site is built by C107, C110, and C198.

The protein belongs to the TtcA family. Homodimer. Mg(2+) serves as cofactor. The cofactor is [4Fe-4S] cluster.

Its subcellular location is the cytoplasm. It catalyses the reaction cytidine(32) in tRNA + S-sulfanyl-L-cysteinyl-[cysteine desulfurase] + AH2 + ATP = 2-thiocytidine(32) in tRNA + L-cysteinyl-[cysteine desulfurase] + A + AMP + diphosphate + H(+). Its pathway is tRNA modification. Its function is as follows. Catalyzes the ATP-dependent 2-thiolation of cytidine in position 32 of tRNA, to form 2-thiocytidine (s(2)C32). The sulfur atoms are provided by the cysteine/cysteine desulfurase (IscS) system. This is tRNA-cytidine(32) 2-sulfurtransferase from Sorangium cellulosum (strain So ce56) (Polyangium cellulosum (strain So ce56)).